The primary structure comprises 217 residues: Probable transaldolase (217 aa).

Residue Lys-83 is the Schiff-base intermediate with substrate of the active site.

The protein belongs to the transaldolase family. Type 3B subfamily.

Its subcellular location is the cytoplasm. It catalyses the reaction D-sedoheptulose 7-phosphate + D-glyceraldehyde 3-phosphate = D-erythrose 4-phosphate + beta-D-fructose 6-phosphate. The protein operates within carbohydrate degradation; pentose phosphate pathway; D-glyceraldehyde 3-phosphate and beta-D-fructose 6-phosphate from D-ribose 5-phosphate and D-xylulose 5-phosphate (non-oxidative stage): step 2/3. Functionally, transaldolase is important for the balance of metabolites in the pentose-phosphate pathway. The protein is Probable transaldolase of Rhizorhabdus wittichii (strain DSM 6014 / CCUG 31198 / JCM 15750 / NBRC 105917 / EY 4224 / RW1) (Sphingomonas wittichii).